Reading from the N-terminus, the 158-residue chain is Transcription elongation factor GreA (158 aa).

The stretch at 53 to 75 forms a coiled coil; that stretch reads AKERQGQVEATIGDLEDKLSRAQ.

It belongs to the GreA/GreB family.

Functionally, necessary for efficient RNA polymerase transcription elongation past template-encoded arresting sites. The arresting sites in DNA have the property of trapping a certain fraction of elongating RNA polymerases that pass through, resulting in locked ternary complexes. Cleavage of the nascent transcript by cleavage factors such as GreA or GreB allows the resumption of elongation from the new 3'terminus. GreA releases sequences of 2 to 3 nucleotides. This Sphingopyxis alaskensis (strain DSM 13593 / LMG 18877 / RB2256) (Sphingomonas alaskensis) protein is Transcription elongation factor GreA.